Here is a 312-residue protein sequence, read N- to C-terminus: DNA-directed RNA polymerase subunit alpha (312 aa).

The interval 1-226 (MIEFEKPIIT…EHLNLFTDLT (226 aa)) is alpha N-terminal domain (alpha-NTD). The tract at residues 243 to 312 (DEKVLDRTIE…DLGLGLKNDK (70 aa)) is alpha C-terminal domain (alpha-CTD).

This sequence belongs to the RNA polymerase alpha chain family. As to quaternary structure, homodimer. The RNAP catalytic core consists of 2 alpha, 1 beta, 1 beta' and 1 omega subunit. When a sigma factor is associated with the core the holoenzyme is formed, which can initiate transcription.

It catalyses the reaction RNA(n) + a ribonucleoside 5'-triphosphate = RNA(n+1) + diphosphate. In terms of biological role, DNA-dependent RNA polymerase catalyzes the transcription of DNA into RNA using the four ribonucleoside triphosphates as substrates. In Streptococcus agalactiae serotype III (strain NEM316), this protein is DNA-directed RNA polymerase subunit alpha.